The sequence spans 57 residues: MEKNRTNIFSVYLMITFLLISIFITMVMSDGEATIINAPNRCPPGHVVVKGRCRIAG.

The first 29 residues, 1 to 29, serve as a signal peptide directing secretion; it reads MEKNRTNIFSVYLMITFLLISIFITMVMS. The propeptide occupies 30–33; that stretch reads DGEA. Cys42 and Cys53 are disulfide-bonded. Ala56 bears the Alanine amide mark.

Post-translationally, O-glycosylated. Expressed by the venom gland.

The protein localises to the secreted. Functionally, serine protease inhibitor which exhibits antifibrinolytic, antielastolytic and antimicrobial activities. Displays antimicrobial activity against bacteria and fungi. Likely functions in the innate immune response to microbial infection and possibly in the venom, as an antifibrinolytic agent. The chain is U17-myrmicitoxin-Tb1a from Tetramorium bicarinatum (Tramp ant).